The primary structure comprises 211 residues: Uracil phosphoribosyltransferase (211 aa).

5-phospho-alpha-D-ribose 1-diphosphate is bound by residues arginine 78, arginine 103, and 130–138 (DPMLATGAT). Uracil-binding positions include isoleucine 195 and 200–202 (GDA). Aspartate 201 contacts 5-phospho-alpha-D-ribose 1-diphosphate.

This sequence belongs to the UPRTase family. Mg(2+) is required as a cofactor.

The catalysed reaction is UMP + diphosphate = 5-phospho-alpha-D-ribose 1-diphosphate + uracil. Its pathway is pyrimidine metabolism; UMP biosynthesis via salvage pathway; UMP from uracil: step 1/1. Its activity is regulated as follows. Allosterically activated by GTP. Its function is as follows. Catalyzes the conversion of uracil and 5-phospho-alpha-D-ribose 1-diphosphate (PRPP) to UMP and diphosphate. This is Uracil phosphoribosyltransferase from Renibacterium salmoninarum (strain ATCC 33209 / DSM 20767 / JCM 11484 / NBRC 15589 / NCIMB 2235).